Consider the following 248-residue polypeptide: Ureidoacrylate amidohydrolase RutB (248 aa).

The Proton acceptor role is filled by aspartate 41. Lysine 150 is an active-site residue. The active-site Nucleophile is cysteine 183.

The protein belongs to the isochorismatase family. RutB subfamily.

It carries out the reaction (Z)-3-ureidoacrylate + H2O + H(+) = (Z)-3-aminoacrylate + NH4(+) + CO2. It catalyses the reaction (Z)-3-ureidoacrylate + H2O = (Z)-3-aminoacrylate + carbamate + H(+). The catalysed reaction is (Z)-2-methylureidoacrylate + H2O + H(+) = (Z)-2-methylaminoacrylate + NH4(+) + CO2. Its function is as follows. Hydrolyzes ureidoacrylate to form aminoacrylate and carbamate. The carbamate hydrolyzes spontaneously, thereby releasing one of the nitrogen atoms of the pyrimidine ring as ammonia and one of its carbon atoms as CO2. The chain is Ureidoacrylate amidohydrolase RutB from Methylorubrum extorquens (strain ATCC 14718 / DSM 1338 / JCM 2805 / NCIMB 9133 / AM1) (Methylobacterium extorquens).